The primary structure comprises 127 residues: Probable soluble cytochrome b562 1 (127 aa).

A signal peptide spans Met-1–Ala-21. Residues Met-28 and His-123 each contribute to the heme b site.

Belongs to the cytochrome b562 family. The cofactor is heme b.

Its subcellular location is the periplasm. Its function is as follows. Electron-transport protein of unknown function. The protein is Probable soluble cytochrome b562 1 (cybC1) of Yersinia pestis.